The sequence spans 156 residues: Ribosome maturation factor RimP (156 aa).

This sequence belongs to the RimP family.

The protein localises to the cytoplasm. Its function is as follows. Required for maturation of 30S ribosomal subunits. This Bacillus velezensis (strain DSM 23117 / BGSC 10A6 / LMG 26770 / FZB42) (Bacillus amyloliquefaciens subsp. plantarum) protein is Ribosome maturation factor RimP.